The following is a 401-amino-acid chain: Keratin-associated protein 10-4 (401 aa).

Tandem repeats lie at residues 36 to 40 (CCEPP), 41 to 45 (CCAPS), 46 to 50 (CCAPA), 67 to 71 (CCPVT), 89 to 93 (CCQQS), 99 to 103 (CCASS), 109 to 113 (CCVPV), 114 to 118 (CCKTV), 119 to 123 (CCKPV), 124 to 128 (CCVPV), 129 to 133 (CCGDS), 135 to 139 (CCQQS), 145 to 149 (CCTSS), 155 to 159 (CCVPI), 160 to 164 (CCKPV), 172 to 176 (CCQQS), 186 to 190 (CCQAV), 208 to 212 (CCQQS), 218 to 222 (CCTSS), 228 to 232 (CCVPV), 233 to 237 (CCKTV), 238 to 242 (CCKPV), 250 to 254 (CCQQS), 270 to 274 (CCVPV), 275 to 279 (CCKPV), 280 to 284 (CCKPV), 297 to 301 (CCQQS), 307 to 311 (CCTSS), 317 to 321 (CCVPV), 322 to 326 (CCKPV), 339 to 343 (CCQQS), 349 to 353 (CCTTS), 354 to 358 (CCRPS), 373 to 377 (CCVPV), and 391 to 395 (CCRPA). Residues 36 to 395 (CCEPPCCAPS…SCQPSCCRPA (360 aa)) are 36 X 5 AA repeats of C-C-X(3).

This sequence belongs to the KRTAP type 10 family. Interacts with hair keratins. Restricted to hair root, not detected in any other tissues.

In terms of biological role, in the hair cortex, hair keratin intermediate filaments are embedded in an interfilamentous matrix, consisting of hair keratin-associated proteins (KRTAP), which are essential for the formation of a rigid and resistant hair shaft through their extensive disulfide bond cross-linking with abundant cysteine residues of hair keratins. The matrix proteins include the high-sulfur and high-glycine-tyrosine keratins. The chain is Keratin-associated protein 10-4 (KRTAP10-4) from Homo sapiens (Human).